We begin with the raw amino-acid sequence, 204 residues long: 3-isopropylmalate dehydratase small subunit (204 aa).

This sequence belongs to the LeuD family. LeuD type 1 subfamily. In terms of assembly, heterodimer of LeuC and LeuD.

The enzyme catalyses (2R,3S)-3-isopropylmalate = (2S)-2-isopropylmalate. Its pathway is amino-acid biosynthesis; L-leucine biosynthesis; L-leucine from 3-methyl-2-oxobutanoate: step 2/4. Catalyzes the isomerization between 2-isopropylmalate and 3-isopropylmalate, via the formation of 2-isopropylmaleate. The sequence is that of 3-isopropylmalate dehydratase small subunit from Ruthia magnifica subsp. Calyptogena magnifica.